The chain runs to 1582 residues: Nik-related protein kinase (1582 aa).

Residues 25–313 (FSLDKTIGLG…SANMLQHPFV (289 aa)) form the Protein kinase domain. ATP contacts are provided by residues 31 to 39 (IGLGTYGRI) and lysine 54. Catalysis depends on aspartate 177, which acts as the Proton acceptor. Composition is skewed to low complexity over residues 492–507 (QVQS…QTQT), 527–538 (PEQQRQGQAPEQ), and 551–572 (EQNQ…AQAE). The tract at residues 492-579 (QVQSQVSKKQ…QAETEAEEPE (88 aa)) is disordered. A coiled-coil region spans residues 725–759 (QRRQRRWEDIFNQHEEELRQVDKDKEDESSDNDEV). 2 disordered regions span residues 783–859 (EVQE…PPYS) and 926–1156 (ASAD…GSGM). Polar residues-rich tracts occupy residues 803–814 (FSSSVPQRSLLE), 825–834 (RSSQNRQNWL), and 850–859 (RRSQSSPPYS). Residues serine 852 and serine 855 each carry the phosphoserine modification. The segment covering 926–944 (ASADTDGDDDDESNDTFED) has biased composition (acidic residues). 2 stretches are compositionally biased toward basic and acidic residues: residues 965-978 (VCKD…KFVD) and 999-1016 (GSCK…EEAY). A phosphoserine mark is found at serine 1027, serine 1031, and serine 1034. 2 stretches are compositionally biased toward basic and acidic residues: residues 1043–1061 (QEEH…EGDG) and 1125–1135 (PDHESDNKDIS). Residues 1136-1154 (ESSTQSDFSANHSSPSKGS) are compositionally biased toward polar residues. The CNH domain maps to 1209–1552 (TSEICCGSLW…RFLCTRGDKL (344 aa)).

Belongs to the protein kinase superfamily. STE Ser/Thr protein kinase family. STE20 subfamily.

It catalyses the reaction L-seryl-[protein] + ATP = O-phospho-L-seryl-[protein] + ADP + H(+). The enzyme catalyses L-threonyl-[protein] + ATP = O-phospho-L-threonyl-[protein] + ADP + H(+). May phosphorylate cofilin-1 and induce actin polymerization through this process, during the late stages of embryogenesis. Involved in the TNF-alpha-induced signaling pathway. The sequence is that of Nik-related protein kinase (NRK) from Homo sapiens (Human).